The sequence spans 461 residues: V-type ATP synthase beta chain (461 aa).

This sequence belongs to the ATPase alpha/beta chains family.

Functionally, produces ATP from ADP in the presence of a proton gradient across the membrane. The V-type beta chain is a regulatory subunit. In Clostridium botulinum (strain ATCC 19397 / Type A), this protein is V-type ATP synthase beta chain.